An 83-amino-acid polypeptide reads, in one-letter code: Exodeoxyribonuclease 7 small subunit (83 aa).

Belongs to the XseB family. In terms of assembly, heterooligomer composed of large and small subunits.

Its subcellular location is the cytoplasm. The enzyme catalyses Exonucleolytic cleavage in either 5'- to 3'- or 3'- to 5'-direction to yield nucleoside 5'-phosphates.. In terms of biological role, bidirectionally degrades single-stranded DNA into large acid-insoluble oligonucleotides, which are then degraded further into small acid-soluble oligonucleotides. The polypeptide is Exodeoxyribonuclease 7 small subunit (Nitrobacter hamburgensis (strain DSM 10229 / NCIMB 13809 / X14)).